The primary structure comprises 222 residues: MGRIKNKQFAVIGLGRFGGSICKELHRMGHEVLAVDINEEKVNAYASYATHAVIANATEENELLSLGIRNFEYVIVAIGANIQASTLTTLLLKELDIPNIWVKAQNYYHHKVLEKIGADRIIHPEKDMGVKIAQSLSDENVLNYIDLSDEYSIVELLATRKLDSKSIIDLNVRAKYGCTILAIKHHGDICLSPAPEDIIREQDCLVIMGHKKDIKRFENEGM.

Residues 6 to 122 (NKQFAVIGLG…LEKIGADRII (117 aa)) form the RCK N-terminal domain. Residues Arg16, 36 to 38 (DIN), 56 to 57 (NA), 78 to 80 (IGA), 103 to 105 (KAQ), His109, and Glu125 each bind NAD(+). Residues 139–222 (ENVLNYIDLS…DIKRFENEGM (84 aa)) form the RCK C-terminal domain.

Belongs to the KtrA potassium transport family. Homodimer, tetramer (dimer of homodimer) and octamer (tetramer of homodimer). Part of the KtrAB complex formed by an octameric catalytic ring of KtrA and a membrane associated dimer of KtrB forming a potassium channel.

It localises to the cell membrane. Catalytic subunit of the KtrAB potassium uptake transporter. The 2 major potassium transporter complexes KtrAB and KtrCD confer resistance to both suddenly imposed and prolonged osmotic stress. This is Ktr system potassium uptake protein A (ktrA) from Bacillus subtilis (strain 168).